We begin with the raw amino-acid sequence, 83 residues long: Hainantoxin-III 12 (83 aa).

An N-terminal signal peptide occupies residues Met-1–Ala-21. A propeptide spanning residues Ser-22–Arg-48 is cleaved from the precursor. 3 cysteine pairs are disulfide-bonded: Cys-50-Cys-65, Cys-57-Cys-70, and Cys-64-Cys-77. Leu-81 bears the Leucine amide mark.

Belongs to the neurotoxin 10 (Hwtx-1) family. 15 (Hntx-3) subfamily. As to quaternary structure, monomer. In terms of tissue distribution, expressed by the venom gland.

It localises to the secreted. Selective antagonist of neuronal tetrodotoxin (TTX)-sensitive voltage-gated sodium channels (IC(50)=1270 nM on Nav1.1/SCN1A, 270 nM on Nav1.2/SCN2A, 491 nM on Nav1.3/SCN3A and 232 nM on Nav1.7/SCN9A). This toxin suppress Nav1.7 current amplitude without significantly altering the activation, inactivation, and repriming kinetics. Short extreme depolarizations partially activate the toxin-bound channel, indicating voltage-dependent inhibition of this toxin. This toxin increases the deactivation of the Nav1.7 current after extreme depolarizations. The toxin-Nav1.7 complex is gradually dissociated upon prolonged strong depolarizations in a voltage-dependent manner, and the unbound toxin rebinds to Nav1.7 after a long repolarization. Moreover, analysis of chimeric channels showed that the DIIS3-S4 linker is critical for toxin binding to Nav1.7. These data are consistent with this toxin interacting with Nav1.7 site 4 and trapping the domain II voltage sensor in the closed state. The sequence is that of Hainantoxin-III 12 from Cyriopagopus hainanus (Chinese bird spider).